The primary structure comprises 289 residues: Heme oxygenase 1, chloroplastic (289 aa).

A chloroplast-targeting transit peptide spans 1–64 (MAPAAASLTA…SASSSRRMVV (64 aa)). H96 is a binding site for heme b.

This sequence belongs to the heme oxygenase family.

It is found in the plastid. The protein localises to the chloroplast. The catalysed reaction is heme b + 3 reduced [NADPH--hemoprotein reductase] + 3 O2 = biliverdin IXalpha + CO + Fe(2+) + 3 oxidized [NADPH--hemoprotein reductase] + 3 H2O + H(+). Catalyzes the opening of the heme ring to form the open-chain tetrapyrrole biliverdin IX with the release of iron and carbon monoxide (CO). Is a key enzyme in the synthesis of the chromophore of the phytochrome family of plant photoreceptors. Essential for photoperiod response and repression of flowering through cytochromes that inhibit flowering by affecting both HD1 and EHD1 flowering pathways. The polypeptide is Heme oxygenase 1, chloroplastic (HO1) (Oryza sativa subsp. japonica (Rice)).